The primary structure comprises 316 residues: N-acetylmuramic acid 6-phosphate etherase (316 aa).

The segment at 1–24 (MTRFQSDAAVSADRGHLMTEQPNP) is disordered. The 164-residue stretch at 66–229 (IASRLKDGGR…STAVMVRLGK (164 aa)) folds into the SIS domain. The active-site Proton donor is Glu-94. Glu-125 is an active-site residue.

It belongs to the GCKR-like family. MurNAc-6-P etherase subfamily. Homodimer.

It carries out the reaction N-acetyl-D-muramate 6-phosphate + H2O = N-acetyl-D-glucosamine 6-phosphate + (R)-lactate. Its pathway is amino-sugar metabolism; N-acetylmuramate degradation. In terms of biological role, specifically catalyzes the cleavage of the D-lactyl ether substituent of MurNAc 6-phosphate, producing GlcNAc 6-phosphate and D-lactate. This Parasynechococcus marenigrum (strain WH8102) protein is N-acetylmuramic acid 6-phosphate etherase.